Reading from the N-terminus, the 171-residue chain is uncharacterized protein (171 aa).

The signal sequence occupies residues 1-20 (MRDFYLFLGAVFLLVLGVWA).

This is an uncharacterized protein from Aquifex aeolicus (strain VF5).